A 433-amino-acid polypeptide reads, in one-letter code: uncharacterized protein (433 aa).

Positions 1–126 (MAAHIALIAH…VIKLLGKTKT (126 aa)) are methylglyoxal synthase. In terms of domain architecture, MGS-like spans 1–145 (MAAHIALIAH…GQGNVERELD (145 aa)). The active site involves aspartate 62. The 136-residue stretch at 127–262 (GHLIFNPVAG…VDTALCNDIP (136 aa)) folds into the DAGKc domain.

It in the N-terminal section; belongs to the methylglyoxal synthase family.

This is an uncharacterized protein from Synechocystis sp. (strain ATCC 27184 / PCC 6803 / Kazusa).